A 429-amino-acid chain; its full sequence is E3 ubiquitin-protein ligase ZNRF4 (429 aa).

The first 27 residues, methionine 1–alanine 27, serve as a signal peptide directing secretion. Residues valine 28–proline 250 lie on the Lumenal side of the membrane. Positions proline 30 to lysine 67 are disordered. Positions proline 37–proline 49 are enriched in basic residues. N-linked (GlcNAc...) asparagine glycans are attached at residues asparagine 107, asparagine 152, and asparagine 229. The PA domain maps to glycine 151 to arginine 223. The chain crosses the membrane as a helical span at residues valine 251 to valine 271. Over leucine 272 to glutamine 429 the chain is Cytoplasmic. An RING-type; atypical zinc finger spans residues cysteine 309 to lysine 352.

As to quaternary structure, interacts with CANX.

It is found in the endoplasmic reticulum membrane. It catalyses the reaction S-ubiquitinyl-[E2 ubiquitin-conjugating enzyme]-L-cysteine + [acceptor protein]-L-lysine = [E2 ubiquitin-conjugating enzyme]-L-cysteine + N(6)-ubiquitinyl-[acceptor protein]-L-lysine.. The protein operates within protein modification; protein ubiquitination. Its function is as follows. E3 ubiquitin-protein ligase that acts as a negative regulator of NOD2 signaling by mediating ubiquitination and degradation of RIPK2. Also catalyzes ubiquitination and proteasomal degradation of CANX within the endoplasmic reticulum. Could have a role in spermatogenesis. The chain is E3 ubiquitin-protein ligase ZNRF4 from Homo sapiens (Human).